The chain runs to 296 residues: MAMVQGKSLKYRVWATHIALWAFLSMIIFPLLMIVAISFREGNFATGSLIPDNPSLEHWKLALGFSVTNADGSVTPPPFPVLTWLWNSVKVAGITSILIVALSTTSAYAFARLRFKGKETILKAMMIFQMFPAVLALVALYALFDKLGQYIPFLGLNTHGGLIFSYLGGIALHVWTIKGYFETIDNSLEEAAALDGATPWQAFRLVLLPLSVPILAVVFILSFIGVVGEVPVASLLLSDVNSYTLAVGMQQYLYPQNYLWGDFAAAAVLSALPITIVFLLAQRWLVGGLTAGGVKG.

At 1–12 the chain is on the cytoplasmic side; it reads MAMVQGKSLKYR. The chain crosses the membrane as a helical span at residues 13-35; sequence VWATHIALWAFLSMIIFPLLMIV. The Periplasmic segment spans residues 36-88; it reads AISFREGNFATGSLIPDNPSLEHWKLALGFSVTNADGSVTPPPFPVLTWLWNS. In terms of domain architecture, ABC transmembrane type-1 spans 85 to 281; the sequence is LWNSVKVAGI…LPITIVFLLA (197 aa). A helical transmembrane segment spans residues 89-111; the sequence is VKVAGITSILIVALSTTSAYAFA. Topologically, residues 112-123 are cytoplasmic; sequence RLRFKGKETILK. The helical transmembrane segment at 124–143 threads the bilayer; it reads AMMIFQMFPAVLALVALYAL. Over 144 to 152 the chain is Periplasmic; the sequence is FDKLGQYIP. A helical membrane pass occupies residues 153–175; sequence FLGLNTHGGLIFSYLGGIALHVW. Residues 176 to 204 are Cytoplasmic-facing; it reads TIKGYFETIDNSLEEAAALDGATPWQAFR. A helical membrane pass occupies residues 205–227; sequence LVLLPLSVPILAVVFILSFIGVV. The Periplasmic segment spans residues 228–257; the sequence is GEVPVASLLLSDVNSYTLAVGMQQYLYPQN. A helical membrane pass occupies residues 258–280; it reads YLWGDFAAAAVLSALPITIVFLL. Residues 281–296 are Cytoplasmic-facing; sequence AQRWLVGGLTAGGVKG.

This sequence belongs to the binding-protein-dependent transport system permease family. MalFG subfamily. As to quaternary structure, the complex is composed of two ATP-binding proteins (MalK), two transmembrane proteins (MalG and MalF) and a solute-binding protein (MalE).

It localises to the cell inner membrane. Functionally, part of the ABC transporter complex MalEFGK involved in maltose/maltodextrin import. Probably responsible for the translocation of the substrate across the membrane. The protein is Maltose/maltodextrin transport system permease protein MalG (malG) of Vibrio vulnificus (strain CMCP6).